A 353-amino-acid chain; its full sequence is Guanine nucleotide-binding protein subunit beta-5 (353 aa).

WD repeat units follow at residues glycine 61–alanine 100, methionine 103–methionine 142, methionine 151–histidine 192, histidine 194–glutamate 236, threonine 237–isoleucine 276, serine 278–isoleucine 320, and glycine 323–tryptophan 352.

Belongs to the WD repeat G protein beta family. As to quaternary structure, component of a complex composed of RGS9 (isoform RGS9-1), GNB5 and RGS9BP; within this complex, the presence of GNB5 stabilizes both itself and RGS9 and increases RGS9 GTPase-activating protein (GAP) activity. Interacts with RGS7, forming the RGS7-GNB5 complex; within this complex, the presence of GNB5 increases RGS7 GTPase-activating protein (GAP) activity. Interacts with GPR158; promotes the GTPase activator activity of the RGS7-GNB5 complex in absence of glycine, in contrast GTPase activator activity of the RGS7-GNB5 complex is inhibited in presence of glycine. Interacts with RGS6. As to expression, detected in brain.

Its subcellular location is the membrane. Enhances GTPase-activating protein (GAP) activity of regulator of G protein signaling (RGS) proteins, such as RGS7 and RGS9, hence involved in the termination of the signaling initiated by the G protein coupled receptors (GPCRs) by accelerating the GTP hydrolysis on the G-alpha subunits, thereby promoting their inactivation. Increases RGS7 GTPase-activating protein (GAP) activity, thereby regulating mood and cognition. Increases RGS9 GTPase-activating protein (GAP) activity, hence contributes to the deactivation of G protein signaling initiated by D(2) dopamine receptors. May play an important role in neuronal signaling, including in the parasympathetic, but not sympathetic, control of heart rate. In Rattus norvegicus (Rat), this protein is Guanine nucleotide-binding protein subunit beta-5 (Gnb5).